A 166-amino-acid polypeptide reads, in one-letter code: NADH-quinone oxidoreductase subunit A (166 aa).

3 helical membrane-spanning segments follow: residues 16-36 (FAVFLIGAVGLCGLMLLGAYF), 68-88 (FYLVAMFFVIFDVEALYLYAW), and 98-118 (IGFIEAAIFILVLLAGLFYLV). Residues 141–166 (RYASSHPQDISQELSVAGSQQANESR) form a disordered region.

It belongs to the complex I subunit 3 family. As to quaternary structure, NDH-1 is composed of 13 different subunits. Subunits NuoA, H, J, K, L, M, N constitute the membrane sector of the complex.

The protein localises to the cell inner membrane. It catalyses the reaction a quinone + NADH + 5 H(+)(in) = a quinol + NAD(+) + 4 H(+)(out). In terms of biological role, NDH-1 shuttles electrons from NADH, via FMN and iron-sulfur (Fe-S) centers, to quinones in the respiratory chain. The immediate electron acceptor for the enzyme in this species is believed to be ubiquinone. Couples the redox reaction to proton translocation (for every two electrons transferred, four hydrogen ions are translocated across the cytoplasmic membrane), and thus conserves the redox energy in a proton gradient. The protein is NADH-quinone oxidoreductase subunit A of Yersinia pseudotuberculosis serotype O:1b (strain IP 31758).